The chain runs to 446 residues: Peptide chain release factor 1, mitochondrial (446 aa).

A mitochondrion-targeting transit peptide spans 1 to 62 (MSHHLCIWLF…LLNKSWSRGC (62 aa)). The interval 298-362 (PKDLRVDTFR…LRARLYQQII (65 aa)) is GGQ domain. Residues 312–314 (GGQ) carry the GGQ motif. The residue at position 314 (glutamine 314) is an N5-methylglutamine.

This sequence belongs to the prokaryotic/mitochondrial release factor family. In terms of processing, methylation of glutamine in the GGQ triplet by HEMK1 is conserved from bacteria to mammals.

The protein localises to the mitochondrion. Its function is as follows. Mitochondrial peptide chain release factor that directs the termination of translation in response to the peptide chain non-canonical stop codons AGG and AGA. Non-canonical termination codons AGG and AGA are found at the end of MT-CO1/COX1 and MT-ND6/ND6 open reading frames, respectively. Recognizes non-canonical stop codons via a network of interactions between the codon, MTRF1 and the ribosomal RNA (rRNA): in contrast to other translation release factors, which identify the codon in the A-site via direct interactions of amino acid side chains with the bases, MTRF1 repositions the first 2 bases of the stop codon to use an intricate network of interactions that includes residues of the release factor, the rRNA of the small ribosomal subunit, as well as neighboring bases of the mRNA. The chain is Peptide chain release factor 1, mitochondrial from Mus musculus (Mouse).